The sequence spans 480 residues: Glycogen synthase (480 aa).

Position 15 (K15) interacts with ADP-alpha-D-glucose.

This sequence belongs to the glycosyltransferase 1 family. Bacterial/plant glycogen synthase subfamily.

The enzyme catalyses [(1-&gt;4)-alpha-D-glucosyl](n) + ADP-alpha-D-glucose = [(1-&gt;4)-alpha-D-glucosyl](n+1) + ADP + H(+). It participates in glycan biosynthesis; glycogen biosynthesis. Functionally, synthesizes alpha-1,4-glucan chains using ADP-glucose. This is Glycogen synthase from Clostridioides difficile (strain 630) (Peptoclostridium difficile).